The following is a 150-amino-acid chain: 3-dehydroquinate dehydratase (150 aa).

Catalysis depends on Tyr26, which acts as the Proton acceptor. 3 residues coordinate substrate: Asn77, His83, and Asp90. His103 serves as the catalytic Proton donor. Substrate-binding positions include 104–105 (LS) and Arg114.

It belongs to the type-II 3-dehydroquinase family. As to quaternary structure, homododecamer.

It carries out the reaction 3-dehydroquinate = 3-dehydroshikimate + H2O. The protein operates within metabolic intermediate biosynthesis; chorismate biosynthesis; chorismate from D-erythrose 4-phosphate and phosphoenolpyruvate: step 3/7. Catalyzes a trans-dehydration via an enolate intermediate. This chain is 3-dehydroquinate dehydratase, found in Photorhabdus laumondii subsp. laumondii (strain DSM 15139 / CIP 105565 / TT01) (Photorhabdus luminescens subsp. laumondii).